The primary structure comprises 596 residues: Putative terpenoid synthase 5 (596 aa).

Mg(2+)-binding residues include Asp-349, Asp-353, Asn-481, and Asp-489. Residues 349-353 (DDTCD) carry the DDXXD motif motif.

Belongs to the terpene synthase family. Tpsa subfamily. Mg(2+) serves as cofactor. Requires Mn(2+) as cofactor.

The protein resides in the cytoplasm. It participates in secondary metabolite biosynthesis; terpenoid biosynthesis. This Arabidopsis thaliana (Mouse-ear cress) protein is Putative terpenoid synthase 5 (TPS05).